The chain runs to 106 residues: Large ribosomal subunit protein uL24 (106 aa).

Belongs to the universal ribosomal protein uL24 family. In terms of assembly, part of the 50S ribosomal subunit.

Functionally, one of two assembly initiator proteins, it binds directly to the 5'-end of the 23S rRNA, where it nucleates assembly of the 50S subunit. In terms of biological role, one of the proteins that surrounds the polypeptide exit tunnel on the outside of the subunit. This is Large ribosomal subunit protein uL24 from Paramagnetospirillum magneticum (strain ATCC 700264 / AMB-1) (Magnetospirillum magneticum).